The sequence spans 541 residues: Membrane protein insertase YidC (541 aa).

The next 6 membrane-spanning stretches (helical) occupy residues Asn-6 to Asp-26, Leu-325 to Phe-345, Phe-349 to Phe-369, Gly-420 to Leu-440, Leu-457 to Met-477, and Val-500 to Gly-520.

It belongs to the OXA1/ALB3/YidC family. Type 1 subfamily. In terms of assembly, interacts with the Sec translocase complex via SecD. Specifically interacts with transmembrane segments of nascent integral membrane proteins during membrane integration.

It is found in the cell inner membrane. Its function is as follows. Required for the insertion and/or proper folding and/or complex formation of integral membrane proteins into the membrane. Involved in integration of membrane proteins that insert both dependently and independently of the Sec translocase complex, as well as at least some lipoproteins. Aids folding of multispanning membrane proteins. This chain is Membrane protein insertase YidC, found in Shewanella baltica (strain OS195).